The chain runs to 900 residues: Bifunctional uridylyltransferase/uridylyl-removing enzyme (900 aa).

The interval 1–342 (MPQVDPELFD…PCEQPVQIQP (342 aa)) is uridylyltransferase. The uridylyl-removing stretch occupies residues 343–705 (LNSRFQLRDG…TTQREFESGS (363 aa)). Residues 461-583 (VDAHTLNLIK…VGDQTHLDYL (123 aa)) enclose the HD domain. 2 consecutive ACT domains span residues 706 to 789 (QIFI…IIQR) and 816 to 891 (VLEV…DNGR).

It belongs to the GlnD family. Requires Mg(2+) as cofactor.

The catalysed reaction is [protein-PII]-L-tyrosine + UTP = [protein-PII]-uridylyl-L-tyrosine + diphosphate. It catalyses the reaction [protein-PII]-uridylyl-L-tyrosine + H2O = [protein-PII]-L-tyrosine + UMP + H(+). Its activity is regulated as follows. Uridylyltransferase (UTase) activity is inhibited by glutamine, while glutamine activates uridylyl-removing (UR) activity. Its function is as follows. Modifies, by uridylylation and deuridylylation, the PII regulatory proteins (GlnB and homologs), in response to the nitrogen status of the cell that GlnD senses through the glutamine level. Under low glutamine levels, catalyzes the conversion of the PII proteins and UTP to PII-UMP and PPi, while under higher glutamine levels, GlnD hydrolyzes PII-UMP to PII and UMP (deuridylylation). Thus, controls uridylylation state and activity of the PII proteins, and plays an important role in the regulation of nitrogen assimilation and metabolism. This chain is Bifunctional uridylyltransferase/uridylyl-removing enzyme, found in Pseudomonas aeruginosa (strain ATCC 15692 / DSM 22644 / CIP 104116 / JCM 14847 / LMG 12228 / 1C / PRS 101 / PAO1).